We begin with the raw amino-acid sequence, 72 residues long: Osmotically-inducible lipoprotein B (72 aa).

The signal sequence occupies residues 1-23 (MFVTSKKMTAAVLAITLAMSLSA). The N-palmitoyl cysteine moiety is linked to residue cysteine 24. Cysteine 24 carries the S-diacylglycerol cysteine lipid modification.

It is found in the cell membrane. Its function is as follows. Provides resistance to osmotic stress. May be important for stationary-phase survival. The sequence is that of Osmotically-inducible lipoprotein B (osmB) from Escherichia coli O157:H7.